We begin with the raw amino-acid sequence, 211 residues long: 2,3-bisphosphoglycerate-dependent phosphoglycerate mutase (211 aa).

Substrate-binding positions include 9–16 (RHGQSEWN), 22–23 (TG), R61, 88–91 (ERDY), K99, 115–116 (RR), and 159–160 (GN). H10 acts as the Tele-phosphohistidine intermediate in catalysis. E88 serves as the catalytic Proton donor/acceptor.

It belongs to the phosphoglycerate mutase family. BPG-dependent PGAM subfamily. In terms of assembly, homodimer.

It carries out the reaction (2R)-2-phosphoglycerate = (2R)-3-phosphoglycerate. It participates in carbohydrate degradation; glycolysis; pyruvate from D-glyceraldehyde 3-phosphate: step 3/5. Functionally, catalyzes the interconversion of 2-phosphoglycerate and 3-phosphoglycerate. This chain is 2,3-bisphosphoglycerate-dependent phosphoglycerate mutase, found in Sinorhizobium fredii (strain NBRC 101917 / NGR234).